The following is an 809-amino-acid chain: Sucrose synthase 2 (809 aa).

Positions 278–756 are GT-B glycosyltransferase; that stretch reads MVFNVVILSP…GLQRIYERYT (479 aa).

It belongs to the glycosyltransferase 1 family. Plant sucrose synthase subfamily.

It catalyses the reaction an NDP-alpha-D-glucose + D-fructose = a ribonucleoside 5'-diphosphate + sucrose + H(+). Its function is as follows. Sucrose-cleaving enzyme that provides UDP-glucose and fructose for various metabolic pathways. The polypeptide is Sucrose synthase 2 (SUS2) (Pisum sativum (Garden pea)).